The following is a 515-amino-acid chain: 1-pyrroline-5-carboxylate dehydrogenase (515 aa).

Active-site residues include Glu-286 and Cys-320.

The protein belongs to the aldehyde dehydrogenase family. RocA subfamily.

It carries out the reaction L-glutamate 5-semialdehyde + NAD(+) + H2O = L-glutamate + NADH + 2 H(+). It participates in amino-acid degradation; L-proline degradation into L-glutamate; L-glutamate from L-proline: step 2/2. This is 1-pyrroline-5-carboxylate dehydrogenase from Bacillus cereus (strain ATCC 10987 / NRS 248).